The sequence spans 506 residues: UDP-N-acetylmuramoyl-L-alanyl-D-glutamate--2,6-diaminopimelate ligase (506 aa).

Ser-42 is a binding site for UDP-N-acetyl-alpha-D-muramoyl-L-alanyl-D-glutamate. An ATP-binding site is contributed by 125–131 (GTSGKTT). Residues 166 to 167 (TT), Ser-193, and Arg-201 each bind UDP-N-acetyl-alpha-D-muramoyl-L-alanyl-D-glutamate. N6-carboxylysine is present on Lys-233. Residues Arg-395, 419 to 422 (DNPR), Gly-475, and Glu-479 contribute to the meso-2,6-diaminopimelate site. Residues 419–422 (DNPR) carry the Meso-diaminopimelate recognition motif motif.

The protein belongs to the MurCDEF family. MurE subfamily. Mg(2+) serves as cofactor. In terms of processing, carboxylation is probably crucial for Mg(2+) binding and, consequently, for the gamma-phosphate positioning of ATP.

The protein resides in the cytoplasm. The catalysed reaction is UDP-N-acetyl-alpha-D-muramoyl-L-alanyl-D-glutamate + meso-2,6-diaminopimelate + ATP = UDP-N-acetyl-alpha-D-muramoyl-L-alanyl-gamma-D-glutamyl-meso-2,6-diaminopimelate + ADP + phosphate + H(+). Its pathway is cell wall biogenesis; peptidoglycan biosynthesis. Catalyzes the addition of meso-diaminopimelic acid to the nucleotide precursor UDP-N-acetylmuramoyl-L-alanyl-D-glutamate (UMAG) in the biosynthesis of bacterial cell-wall peptidoglycan. This is UDP-N-acetylmuramoyl-L-alanyl-D-glutamate--2,6-diaminopimelate ligase from Streptomyces coelicolor (strain ATCC BAA-471 / A3(2) / M145).